The primary structure comprises 377 residues: Spermidine/putrescine import ATP-binding protein PotA (377 aa).

The region spanning 18–248 (IRLSGISKSF…PKNLFVARFI (231 aa)) is the ABC transporter domain. An ATP-binding site is contributed by 50–57 (GPSGCGKT).

Belongs to the ABC transporter superfamily. Spermidine/putrescine importer (TC 3.A.1.11.1) family. As to quaternary structure, the complex is composed of two ATP-binding proteins (PotA), two transmembrane proteins (PotB and PotC) and a solute-binding protein (PotD).

It localises to the cell inner membrane. It carries out the reaction ATP + H2O + polyamine-[polyamine-binding protein]Side 1 = ADP + phosphate + polyamineSide 2 + [polyamine-binding protein]Side 1.. In terms of biological role, part of the ABC transporter complex PotABCD involved in spermidine/putrescine import. Responsible for energy coupling to the transport system. This Vibrio cholerae serotype O1 (strain ATCC 39315 / El Tor Inaba N16961) protein is Spermidine/putrescine import ATP-binding protein PotA.